Reading from the N-terminus, the 376-residue chain is Actin-related protein T1 (376 aa).

It belongs to the actin family.

Its subcellular location is the cytoplasm. The protein localises to the cytoskeleton. It is found in the nucleus. The protein resides in the cytoplasmic vesicle. It localises to the secretory vesicle. Its subcellular location is the acrosome. Functionally, negatively regulates the Hedgehog (SHH) signaling. Binds to the promoter of the SHH signaling mediator, GLI1, and inhibits its expression. The protein is Actin-related protein T1 (Actrt1) of Mus musculus (Mouse).